The primary structure comprises 486 residues: H2.0-like homeobox protein (486 aa).

2 disordered regions span residues 83–173 (ASFQ…SSKD) and 330–486 (KWRH…LGGL). Low complexity predominate over residues 125 to 135 (QQQQQQQQPQQ). The segment at residues 276–335 (RSWSRAVFSNLQRKGLEKRFEIQKYVTKPDRKQLAAMLGLTDAQVKVWFQNRRMKWRHSK) is a DNA-binding region (homeobox). Basic and acidic residues-rich tracts occupy residues 334–349 (SKEA…EAGE) and 363–372 (EERSPSRSEG). Positions 373 to 383 (EAESESSDPES) are enriched in acidic residues. A compositionally biased stretch (basic and acidic residues) spans 390–401 (DTERTEGTERSL). Over residues 409–420 (ASAAGALLAASS) the composition is skewed to low complexity. Positions 421-440 (GGSGGSGGGGGGGFNFGGLS) are enriched in gly residues. Over residues 441–474 (SGSTTSAGSSGSHSSGGASELLPAPQPSLSSAPK) the composition is skewed to low complexity. The span at 475–486 (SPEPVPAPLGGL) shows a compositional bias: pro residues.

This sequence belongs to the H2.0 homeobox family.

The protein localises to the nucleus. Functionally, transcription factor required for TBX21/T-bet-dependent maturation of Th1 cells as well as maintenance of Th1-specific gene expression. Involved in embryogenesis and hematopoiesis. The chain is H2.0-like homeobox protein (HLX) from Bos taurus (Bovine).